The sequence spans 352 residues: Replication-associated protein (352 aa).

The CRESS-DNA virus Rep endonuclease domain occupies 9–117 (QINAKNYFLT…DGDTLVWGEF (109 aa)). Residues 16-19 (FLTY) carry the RCR-1 motif. A divalent metal cation-binding residues include glutamate 50, histidine 58, and histidine 60. The RCR-2 signature appears at 58–60 (HLH). The active-site For DNA cleavage activity is the tyrosine 104. Positions 104–107 (YIDK) match the RCR-3 motif. Position 108 (aspartate 108) interacts with a divalent metal cation. The binding to RBR1 stretch occupies residues 144–154 (KEEALQIIREK). The tract at residues 157–177 (EKYLFQFHNLNSNLDRIFDKT) is oligomerization. Residue 223-230 (GDSRTGKT) coordinates ATP.

Belongs to the geminiviridae Rep protein family. In terms of assembly, homooligomer. Interacts with the replication enhancer protein (REn). Interacts with host retinoblastoma-related protein 1 (RBR1), and may thereby induce the transcription of host replicative enzymes even if the cell is not dividing anymore. Interacts with host PCNA. Interacts with host SCE1 protein. Interacts with host GRIK1, GRIK2, GRIMP and histone H3. The cofactor is Mg(2+). Mn(2+) serves as cofactor.

It is found in the host nucleus. Essential for the replication of viral ssDNA. The closed circular ssDNA genome is first converted to a superhelical dsDNA. Rep binds a specific region at the genome origin of replication. It introduces an endonucleolytic nick within the conserved sequence 5'-TAATATTAC-3' in the intergenic region of the genome present in all geminiviruses, thereby initiating the rolling circle replication (RCR). Following cleavage, binds covalently to the 5'-phosphate of DNA as a tyrosyl ester. The cleavage gives rise to a free 3'-OH that serves as a primer for the cellular DNA polymerase. The polymerase synthesizes the (+) strand DNA by rolling circle mechanism. After one round of replication, a Rep-catalyzed nucleotidyl transfer reaction releases a circular single-stranded virus genome, thereby terminating the replication. Displays origin-specific DNA cleavage, nucleotidyl transferase, ATPase and helicase activities. This Solanum lycopersicum (Tomato) protein is Replication-associated protein.